The primary structure comprises 103 residues: uncharacterized protein (103 aa).

Residues 69–103 (SSISYPGGGGGGGGSAKSLSSSKPGGGGGSPLIFL) form a disordered region. Composition is skewed to gly residues over residues 74-83 (PGGGGGGGGS) and 92-103 (PGGGGGSPLIFL).

This is an uncharacterized protein from Saccharomyces cerevisiae (strain ATCC 204508 / S288c) (Baker's yeast).